Reading from the N-terminus, the 498-residue chain is Ribosomal RNA small subunit methyltransferase G 2 (498 aa).

The segment at 1-230 (MRNGTIRYPG…FQRLGPPTRI (230 aa)) is methyltransferase G. G89, M94, and R154 together coordinate S-adenosyl-L-methionine. Residues 231–498 (RKETAMKRHG…SQTKHSPAPA (268 aa)) form a methyltransferase TrmH family region.

The protein in the N-terminal section; belongs to the methyltransferase superfamily. RNA methyltransferase RsmG family. In the C-terminal section; belongs to the class IV-like SAM-binding methyltransferase superfamily. RNA methyltransferase TrmH family.

The protein resides in the cytoplasm. The enzyme catalyses guanosine(527) in 16S rRNA + S-adenosyl-L-methionine = N(7)-methylguanosine(527) in 16S rRNA + S-adenosyl-L-homocysteine. Functionally, specifically methylates the N7 position of guanine in position 527 of 16S rRNA. This chain is Ribosomal RNA small subunit methyltransferase G 2 (rsmG2), found in Syntrophobacter fumaroxidans (strain DSM 10017 / MPOB).